A 671-amino-acid polypeptide reads, in one-letter code: Zinc finger protein 568 (671 aa).

The interval 1-31 (MERLSQMAGRRAWCAEDSVPRQEEEDRTRPS) is disordered. Residues 18-29 (SVPRQEEEDRTR) show a composition bias toward basic and acidic residues. 2 KRAB domains span residues 34–105 (VTFK…RRSP) and 124–195 (LRFE…IWHP). The interval 214–366 (EKMAKKHTCP…QGSERPHKCK (153 aa)) is disordered. 3 stretches are compositionally biased toward basic and acidic residues: residues 226–251 (EDSK…EGHL), 296–312 (IERE…EHAQ), and 329–341 (RPQE…ERKK). 11 C2H2-type zinc fingers span residues 363–385 (HKCK…QKLH), 391–413 (YKCQ…HRVH), 419–441 (FECK…QRIH), 447–469 (HKCK…LLTH), 475–497 (FECK…QMSH), 503–525 (HKCK…QSVH), 531–553 (YKCK…QRAH), 559–581 (YKCK…QKVH), 587–609 (HKCK…ERSH), 615–637 (YECK…QKIH), and 643–665 (YKCQ…QRIH).

This sequence belongs to the krueppel C2H2-type zinc-finger protein family. As to quaternary structure, interacts with TRIM28. Little or no expression detected in most adult tissues (brain, liver, kidney, spleen, testis, ovary). In the hippocampus, detected in neural stem cells within the subventricular zone and subgranular zone.

Its subcellular location is the nucleus. Functionally, has transcriptional repression activity, partially through the recruitment of the corepressor TRIM28 but also has repression activity independently of this interaction. Essential during embryonic development, where it acts as direct repressor of IGF2-P0, placental-specific transcript of IGF2, in early development and regulates convergent extension movements required for axis elongation and tissue morphogenesis in all germ layers. Also important for normal morphogenesis of extraembryonic tissues including the yolk sac, extraembryonic mesoderm and placenta. May enhance proliferation or maintenance of neural stem cells. In Mus musculus (Mouse), this protein is Zinc finger protein 568.